The sequence spans 758 residues: MTILNHTLGFPRIGLNRELKKAQEQYWSGELMIKDLLLVGSELRKKNWQKQKESGIDYIPVGDFAWYDHVLTTSMMLGNIPERHNNTVDSIDLDCLFRIARGCPPDISASEMTKWFNTNYHYIVPEFYKNKVLKYSWKQILDEVDEALLLGHKVKPILLGPITYLWLGKVKGEYFDRLDILKDIILIYKHVLKELSNRSIDFVQIDEPVLVLELPKKWKDAYHYAYKELSGITKLLLTTYFDSIEHNIEFIRDLPVQGIHIDLVHGKYNLKNFSSKIPSEWMLSLGVINGRNIWRSDLLKWFKSIKSISNHHRKILIGSSCSLLHTPIDLVAEKHLDKEVKRWFSFAVQKCEELRLLSSALNDNDIDSIKEWSLPIYERSVSKRVNKIEVENRLSNVLIDKHQRLSPYKTRSIEQNKKFNFPILPTTTIGSFPQTISIRKLRRDFKLGLVTEEEYTKIIKKNIKKVIKIQEELDIDVLVHGEAERNDMVEYFGEHLDGFAFTDNGWVQSYGSRCVKPPIIIGDISRPKPMTIEWSKYAQSLTKKPVKGMLTGPVTILLWSFPREDVSLKKIATQIALALYDEVLDLEKEKIEIIQIDEPALREGLPLRKSSWHEYLSWAVDVFRLSASGVKNTTQIHTHMCYCEFNDIMDSIALLDADVITIEAARSDMELLESFKKFKYPNEVGPGAYDIHSSNIPSVQSIISLLNKAMKYIPLKRIWVNPDCGLKTRNWNETILSLKNMVEATKILREKMKDSECD.

Residues 17–20 and Lys114 contribute to the 5-methyltetrahydropteroyltri-L-glutamate site; that span reads RELK. L-homocysteine-binding positions include 429-431 and Glu482; that span reads IGS. L-methionine contacts are provided by residues 429–431 and Glu482; that span reads IGS. Residues 513–514 and Trp559 contribute to the 5-methyltetrahydropteroyltri-L-glutamate site; that span reads RC. Asp597 serves as a coordination point for L-homocysteine. Residue Asp597 participates in L-methionine binding. Glu603 contributes to the 5-methyltetrahydropteroyltri-L-glutamate binding site. The Zn(2+) site is built by His639, Cys641, and Glu663. Catalysis depends on His692, which acts as the Proton donor. Position 724 (Cys724) interacts with Zn(2+).

The protein belongs to the vitamin-B12 independent methionine synthase family. It depends on Zn(2+) as a cofactor.

The catalysed reaction is 5-methyltetrahydropteroyltri-L-glutamate + L-homocysteine = tetrahydropteroyltri-L-glutamate + L-methionine. It participates in amino-acid biosynthesis; L-methionine biosynthesis via de novo pathway; L-methionine from L-homocysteine (MetE route): step 1/1. Catalyzes the transfer of a methyl group from 5-methyltetrahydrofolate to homocysteine resulting in methionine formation. The protein is 5-methyltetrahydropteroyltriglutamate--homocysteine methyltransferase of Buchnera aphidicola subsp. Acyrthosiphon pisum (strain APS) (Acyrthosiphon pisum symbiotic bacterium).